A 340-amino-acid chain; its full sequence is Mitochondrial distribution and morphology protein 12 (340 aa).

An SMP-LTD domain is found at 1–321; sequence MSIDLDWDGM…WPSWIKVSME (321 aa). 3 disordered regions span residues 79–107, 161–184, and 319–340; these read HYLP…TNPI, SVRE…EDRE, and SMED…EDEH. The segment covering 89-106 has biased composition (polar residues); that stretch reads QRRSAPSTPHIHTNTTNP. The span at 321-340 shows a compositional bias: acidic residues; sequence EDEDSDDEEGEEEGDQEDEH.

This sequence belongs to the MDM12 family. As to quaternary structure, component of the ER-mitochondria encounter structure (ERMES) or MDM complex, composed of MMM1, MDM10, MDM12 and MDM34. An MMM1 homodimer associates with one molecule of MDM12 on each side in a pairwise head-to-tail manner, and the SMP-LTD domains of MMM1 and MDM12 generate a continuous hydrophobic tunnel for phospholipid trafficking.

It is found in the mitochondrion outer membrane. It localises to the endoplasmic reticulum membrane. Its function is as follows. Component of the ERMES/MDM complex, which serves as a molecular tether to connect the endoplasmic reticulum (ER) and mitochondria. Components of this complex are involved in the control of mitochondrial shape and protein biogenesis, and function in nonvesicular lipid trafficking between the ER and mitochondria. MDM12 is required for the interaction of the ER-resident membrane protein MMM1 and the outer mitochondrial membrane-resident beta-barrel protein MDM10. The MDM12-MMM1 subcomplex functions in the major beta-barrel assembly pathway that is responsible for biogenesis of all mitochondrial outer membrane beta-barrel proteins, and acts in a late step after the SAM complex. The MDM10-MDM12-MMM1 subcomplex further acts in the TOM40-specific pathway after the action of the MDM12-MMM1 complex. Essential for establishing and maintaining the structure of mitochondria and maintenance of mtDNA nucleoids. This Yarrowia lipolytica (strain CLIB 122 / E 150) (Yeast) protein is Mitochondrial distribution and morphology protein 12.